Reading from the N-terminus, the 264-residue chain is MLLAWVHTFLLSNMLLAEAYGSGGCFWDNGHLYREDQPSPAPGLRCLNWLAAQGSRESLTEPSPGNHNYCRNPDQDPRGPWCYISSETGVPEKRPCEDVSCPETTSQAPPPSSAMELEEKSGAPGDKEAQVFPPANALPARSEAAEVQPVIGISQLVRMNSKEKKDLGTLGYVLGITMMVIILAIGAGIIVGYTYKRGKDLKEQHEKKACEREMQRITLPLSAFTNPTCETVDENTIIVHSNQTPADVQEGSTLLTGQAGTPGA.

An N-terminal signal peptide occupies residues 1 to 21; the sequence is MLLAWVHTFLLSNMLLAEAYG. Residues 22–170 lie on the Extracellular side of the membrane; that stretch reads SGGCFWDNGH…SKEKKDLGTL (149 aa). One can recognise a Kringle domain in the interval 24 to 101; that stretch reads GCFWDNGHLY…EKRPCEDVSC (78 aa). Cystine bridges form between Cys25-Cys101, Cys46-Cys82, and Cys70-Cys96. Positions 94–129 are disordered; that stretch reads RPCEDVSCPETTSQAPPPSSAMELEEKSGAPGDKEA. Basic and acidic residues predominate over residues 117 to 129; the sequence is LEEKSGAPGDKEA. Residues 171 to 191 traverse the membrane as a helical segment; that stretch reads GYVLGITMMVIILAIGAGIIV. Residues 192 to 264 are Cytoplasmic-facing; that stretch reads GYTYKRGKDL…LTGQAGTPGA (73 aa).

The protein localises to the cell membrane. Its function is as follows. Negative regulator of hepatic phosphatidylinositol 3-kinase (PI3K) activity. This chain is Phosphoinositide-3-kinase-interacting protein 1 (Pik3ip1), found in Mus musculus (Mouse).